We begin with the raw amino-acid sequence, 289 residues long: Shikimate dehydrogenase (NADP(+)) (289 aa).

Residues 22 to 24 (SRS) and threonine 69 contribute to the shikimate site. Residue lysine 73 is the Proton acceptor of the active site. Glutamate 85 is a binding site for NADP(+). Positions 94 and 109 each coordinate shikimate. NADP(+) is bound by residues 134-138 (GAGGA), 158-163 (NRTLSR), and isoleucine 226. Tyrosine 228 is a shikimate binding site. Glycine 249 provides a ligand contact to NADP(+).

It belongs to the shikimate dehydrogenase family. Homodimer.

The catalysed reaction is shikimate + NADP(+) = 3-dehydroshikimate + NADPH + H(+). The protein operates within metabolic intermediate biosynthesis; chorismate biosynthesis; chorismate from D-erythrose 4-phosphate and phosphoenolpyruvate: step 4/7. Functionally, involved in the biosynthesis of the chorismate, which leads to the biosynthesis of aromatic amino acids. Catalyzes the reversible NADPH linked reduction of 3-dehydroshikimate (DHSA) to yield shikimate (SA). In Brucella abortus (strain S19), this protein is Shikimate dehydrogenase (NADP(+)).